A 164-amino-acid polypeptide reads, in one-letter code: Probable metalloprotease y4qB (164 aa).

An MPN domain is found at 5–142; the sequence is IWIPESVVEA…WLPHAWIGQL (138 aa). H89, H91, and D103 together coordinate Zn(2+).

This sequence belongs to the peptidase M67B family.

The chain is Probable metalloprotease y4qB from Sinorhizobium fredii (strain NBRC 101917 / NGR234).